The chain runs to 209 residues: MTDDYEKLLEKAKNVLSSSTKNIDRLKIPDPEIIREGKATIIRNFQDIVDIINRDPEHIIKFLTREFGTNIVQNGRRLIINRKLTLEELLDKMNEYINTYVRCYECGSLDTEIQKSGRISLLVCKACGAQHPIHSVREAKDDETIEEGKEYVVEITEVGSSGEGRTNYKGYTIFVPGAKRGETVKVRIKKVKNDVAIGEIIERSKQEKK.

Residues 144–202 (TIEEGKEYVVEITEVGSSGEGRTNYKGYTIFVPGAKRGETVKVRIKKVKNDVAIGEIIE) form the TRAM domain.

Belongs to the eIF-2-beta/eIF-5 family. As to quaternary structure, heterotrimer composed of an alpha, a beta and a gamma chain.

In terms of biological role, eIF-2 functions in the early steps of protein synthesis by forming a ternary complex with GTP and initiator tRNA. The protein is Translation initiation factor 2 subunit beta (eif2b) of Thermoplasma acidophilum (strain ATCC 25905 / DSM 1728 / JCM 9062 / NBRC 15155 / AMRC-C165).